Here is a 500-residue protein sequence, read N- to C-terminus: Aspartyl/glutamyl-tRNA(Asn/Gln) amidotransferase subunit B (500 aa).

The protein belongs to the GatB/GatE family. GatB subfamily. In terms of assembly, heterotrimer of A, B and C subunits.

It carries out the reaction L-glutamyl-tRNA(Gln) + L-glutamine + ATP + H2O = L-glutaminyl-tRNA(Gln) + L-glutamate + ADP + phosphate + H(+). The enzyme catalyses L-aspartyl-tRNA(Asn) + L-glutamine + ATP + H2O = L-asparaginyl-tRNA(Asn) + L-glutamate + ADP + phosphate + 2 H(+). Allows the formation of correctly charged Asn-tRNA(Asn) or Gln-tRNA(Gln) through the transamidation of misacylated Asp-tRNA(Asn) or Glu-tRNA(Gln) in organisms which lack either or both of asparaginyl-tRNA or glutaminyl-tRNA synthetases. The reaction takes place in the presence of glutamine and ATP through an activated phospho-Asp-tRNA(Asn) or phospho-Glu-tRNA(Gln). The sequence is that of Aspartyl/glutamyl-tRNA(Asn/Gln) amidotransferase subunit B from Rhizobium johnstonii (strain DSM 114642 / LMG 32736 / 3841) (Rhizobium leguminosarum bv. viciae).